We begin with the raw amino-acid sequence, 577 residues long: Protein GPR108 (577 aa).

A signal peptide spans 1–34; that stretch reads MAVSERRGLSGESPAQCRWEYLSLLVLMLSGCSG. 2 N-linked (GlcNAc...) asparagine glycosylation sites follow: Asn-59 and Asn-111. The tract at residues 144–224 is disordered; it reads LLPEAPSQSG…TRGPSGKEKD (81 aa). Residues Asn-233 and Asn-237 are each glycosylated (N-linked (GlcNAc...) asparagine). The next 7 membrane-spanning stretches (helical) occupy residues 296-316, 325-345, 369-389, 400-420, 434-454, 482-502, and 506-526; these read LYLI…SVLC, IHWL…FHSI, LLKG…WAFV, IFGI…VIES, ILFL…VWSI, VMVI…RVAV, and WQWL…VLTG.

It belongs to the LU7TM family.

The protein localises to the golgi apparatus. Its subcellular location is the cis-Golgi network membrane. It is found in the trans-Golgi network membrane. The protein resides in the golgi apparatus membrane. Functionally, may play a role in intracellular immune modulation by activating NF-kappaB response and attenuating Toll-like-receptor response. The protein is Protein GPR108 (Gpr108) of Rattus norvegicus (Rat).